The sequence spans 475 residues: AAA-ATPase At1g43910 (475 aa).

The chain crosses the membrane as a helical span at residues 11 to 28 (VSAVFSLYTSFSAITMLF). Residue threonine 85 is modified to Phosphothreonine. 246–253 (GPPGTGKS) contributes to the ATP binding site. Disordered regions lie at residues 306–328 (SRRR…PQKR) and 453–475 (KGED…EAET). Residues 457 to 467 (SSVEEEGEIED) show a composition bias toward acidic residues.

The protein belongs to the AAA ATPase family. BCS1 subfamily. It depends on Mg(2+) as a cofactor. As to expression, expressed in developing shoots.

Its subcellular location is the membrane. It catalyses the reaction ATP + H2O = ADP + phosphate + H(+). This chain is AAA-ATPase At1g43910, found in Arabidopsis thaliana (Mouse-ear cress).